The sequence spans 343 residues: Allantoicase (343 aa).

The protein belongs to the allantoicase family.

It carries out the reaction allantoate + H2O = (S)-ureidoglycolate + urea. The protein operates within nitrogen metabolism; (S)-allantoin degradation; (S)-ureidoglycolate from allantoate (aminidohydrolase route): step 1/1. Utilization of purines as secondary nitrogen sources, when primary sources are limiting. This chain is Allantoicase (DAL2), found in Saccharomyces cerevisiae (strain ATCC 204508 / S288c) (Baker's yeast).